A 94-amino-acid polypeptide reads, in one-letter code: Small ribosomal subunit protein bS20 (94 aa).

The span at 1 to 10 (MANHASADKR) shows a compositional bias: basic and acidic residues. The segment at 1–20 (MANHASADKRNRQRITRTAR) is disordered. Over residues 11–20 (NRQRITRTAR) the composition is skewed to basic residues.

This sequence belongs to the bacterial ribosomal protein bS20 family.

Its function is as follows. Binds directly to 16S ribosomal RNA. This Sorangium cellulosum (strain So ce56) (Polyangium cellulosum (strain So ce56)) protein is Small ribosomal subunit protein bS20.